A 276-amino-acid polypeptide reads, in one-letter code: Homeobox-leucine zipper protein HOX22 (276 aa).

The homeobox DNA-binding region spans 70-130; it reads AGERKRRFTE…NKRARWRSKQ (61 aa). Residues 129–173 form a leucine-zipper region; it reads KQLEHDYAALRSKYDALHSRVESLKQEKLALTVQLHELRERLRER. The disordered stretch occupies residues 170–212; it reads LREREERSGNGGAATTAASSSSCNGSGSEEVDDDDDKRNAAAG. The segment covering 182–197 has biased composition (low complexity); it reads AATTAASSSSCNGSGS.

The protein belongs to the HD-ZIP homeobox family. Class I subfamily. Expressed in seedlings, roots, stems, leaf sheaths and blades and panicles.

The protein localises to the nucleus. Its function is as follows. Probable transcription factor. This chain is Homeobox-leucine zipper protein HOX22 (HOX22), found in Oryza sativa subsp. japonica (Rice).